The chain runs to 63 residues: Large ribosomal subunit protein uL29 (63 aa).

It belongs to the universal ribosomal protein uL29 family.

The protein is Large ribosomal subunit protein uL29 of Christiangramia forsetii (strain DSM 17595 / CGMCC 1.15422 / KT0803) (Gramella forsetii).